The following is a 461-amino-acid chain: uncharacterized protein (461 aa).

Basic and acidic residues predominate over residues M1–Y19. The segment at M1–I21 is disordered.

The protein belongs to the CapA family.

Functionally, could be involved in the biosynthesis of a cell wall component. This is an uncharacterized protein from Sinorhizobium fredii (strain NBRC 101917 / NGR234).